The chain runs to 349 residues: GTPase Obg (349 aa).

One can recognise an Obg domain in the interval M1 to I159. Residues A160–Q327 enclose the OBG-type G domain. GTP-binding positions include G166 to S173, F191 to H195, D212 to G215, S279 to D282, and S308 to A310. Mg(2+) is bound by residues S173 and T193.

The protein belongs to the TRAFAC class OBG-HflX-like GTPase superfamily. OBG GTPase family. Monomer. Requires Mg(2+) as cofactor.

It localises to the cytoplasm. Its function is as follows. An essential GTPase which binds GTP, GDP and possibly (p)ppGpp with moderate affinity, with high nucleotide exchange rates and a fairly low GTP hydrolysis rate. Plays a role in control of the cell cycle, stress response, ribosome biogenesis and in those bacteria that undergo differentiation, in morphogenesis control. This chain is GTPase Obg, found in Chelativorans sp. (strain BNC1).